A 208-amino-acid chain; its full sequence is 2,3-bisphosphoglycerate-dependent phosphoglycerate mutase (208 aa).

Substrate is bound by residues 9–16 (RHGQSEWN), 22–23 (TG), R61, 88–91 (ERDY), K99, 115–116 (RR), and 159–160 (GN). H10 acts as the Tele-phosphohistidine intermediate in catalysis. E88 acts as the Proton donor/acceptor in catalysis.

It belongs to the phosphoglycerate mutase family. BPG-dependent PGAM subfamily. In terms of assembly, homodimer.

The catalysed reaction is (2R)-2-phosphoglycerate = (2R)-3-phosphoglycerate. The protein operates within carbohydrate degradation; glycolysis; pyruvate from D-glyceraldehyde 3-phosphate: step 3/5. Its function is as follows. Catalyzes the interconversion of 2-phosphoglycerate and 3-phosphoglycerate. This Methylobacterium sp. (strain 4-46) protein is 2,3-bisphosphoglycerate-dependent phosphoglycerate mutase.